We begin with the raw amino-acid sequence, 429 residues long: D-inositol 3-phosphate glycosyltransferase (429 aa).

His-20 contributes to the 1D-myo-inositol 3-phosphate binding site. Residues 26–27 (QP) and Gly-34 each bind UDP-N-acetyl-alpha-D-glucosamine. 1D-myo-inositol 3-phosphate is bound by residues 31–36 (DAGGMN), Lys-89, Tyr-122, Thr-146, and Arg-166. UDP-N-acetyl-alpha-D-glucosamine contacts are provided by Arg-240, Lys-245, and Gln-306. Residues Tyr-315, Arg-316, and Ala-318 each contribute to the Mg(2+) site. Residues Glu-328 and Glu-336 each coordinate UDP-N-acetyl-alpha-D-glucosamine. Residue Thr-342 participates in Mg(2+) binding.

The protein belongs to the glycosyltransferase group 1 family. MshA subfamily. In terms of assembly, homodimer.

The enzyme catalyses 1D-myo-inositol 3-phosphate + UDP-N-acetyl-alpha-D-glucosamine = 1D-myo-inositol 2-acetamido-2-deoxy-alpha-D-glucopyranoside 3-phosphate + UDP + H(+). In terms of biological role, catalyzes the transfer of a N-acetyl-glucosamine moiety to 1D-myo-inositol 3-phosphate to produce 1D-myo-inositol 2-acetamido-2-deoxy-glucopyranoside 3-phosphate in the mycothiol biosynthesis pathway. The polypeptide is D-inositol 3-phosphate glycosyltransferase (Nocardiopsis dassonvillei (strain ATCC 23218 / DSM 43111 / CIP 107115 / JCM 7437 / KCTC 9190 / NBRC 14626 / NCTC 10488 / NRRL B-5397 / IMRU 509) (Actinomadura dassonvillei)).